Consider the following 140-residue polypeptide: ATP synthase epsilon chain (140 aa).

This sequence belongs to the ATPase epsilon chain family. In terms of assembly, F-type ATPases have 2 components, CF(1) - the catalytic core - and CF(0) - the membrane proton channel. CF(1) has five subunits: alpha(3), beta(3), gamma(1), delta(1), epsilon(1). CF(0) has three main subunits: a, b and c.

It localises to the cell inner membrane. In terms of biological role, produces ATP from ADP in the presence of a proton gradient across the membrane. The polypeptide is ATP synthase epsilon chain (Yersinia enterocolitica serotype O:8 / biotype 1B (strain NCTC 13174 / 8081)).